Here is a 337-residue protein sequence, read N- to C-terminus: Transaldolase (337 aa).

Residues 1–10 (MSGSPVKRQR) carry the Nuclear localization signal motif. Lys142 (schiff-base intermediate with substrate) is an active-site residue. Lys219 carries the post-translational modification N6-acetyllysine. Phosphoserine is present on residues Ser237 and Ser256. Residues Lys269, Lys286, and Lys321 each carry the N6-acetyllysine modification.

The protein belongs to the transaldolase family. Type 1 subfamily. Homodimer. Interacts with KPNA1 and KPNA4.

The protein localises to the nucleus. The protein resides in the cytoplasm. The catalysed reaction is D-sedoheptulose 7-phosphate + D-glyceraldehyde 3-phosphate = D-erythrose 4-phosphate + beta-D-fructose 6-phosphate. Its pathway is carbohydrate degradation; pentose phosphate pathway; D-glyceraldehyde 3-phosphate and beta-D-fructose 6-phosphate from D-ribose 5-phosphate and D-xylulose 5-phosphate (non-oxidative stage): step 2/3. Its function is as follows. Catalyzes the rate-limiting step of the non-oxidative phase in the pentose phosphate pathway. Catalyzes the reversible conversion of sedheptulose-7-phosphate and D-glyceraldehyde 3-phosphate into erythrose-4-phosphate and beta-D-fructose 6-phosphate. In Sus scrofa (Pig), this protein is Transaldolase (TALDO1).